Reading from the N-terminus, the 443-residue chain is D(2) dopamine receptor (443 aa).

Residues 1–37 are Extracellular-facing; it reads MDPLNLSWYDDDPESRNWSRPFNGSEGKVGKPHYNYY. N-linked (GlcNAc...) asparagine glycans are attached at residues Asn5, Asn17, and Asn23. A helical membrane pass occupies residues 38–60; sequence AMLLTLLIFVIVFGNVLVCMAVS. The Cytoplasmic segment spans residues 61–70; sequence REKALQTTTN. The helical transmembrane segment at 71–93 threads the bilayer; sequence YLIVSLAVADLLVATLVMPWVVY. The Extracellular segment spans residues 94–108; it reads LEVVGEWKFSRIHCD. Cys107 and Cys182 form a disulfide bridge. Residues 109-130 form a helical membrane-spanning segment; it reads IFVTLDVMMCTASILNLCAISI. Topologically, residues 131–151 are cytoplasmic; the sequence is DRYTAVAMPMLYNTRYSSKRR. The chain crosses the membrane as a helical span at residues 152 to 172; sequence VTVMIAIVWVLSFTISCPLLF. The Extracellular segment spans residues 173–188; sequence GLNNTDQNECIIANPA. A helical transmembrane segment spans residues 189–213; sequence FVVYSSVVSFYVPFIVTLLVYIKIY. The interval 211–373 is interaction with PPP1R9B; that stretch reads KIYIVLRRRR…SQQKEKKATQ (163 aa). Topologically, residues 214–373 are cytoplasmic; the sequence is IVLRRRRKRV…SQQKEKKATQ (160 aa). The disordered stretch occupies residues 282-331; it reads EMLSSTSPPERTRYSPIPPSHHQLTLPDPSHHGLHSTANSPVKPEKNGHA. A helical membrane pass occupies residues 374–395; that stretch reads MLAIVLGVFIICWLPFFITHIL. At 396-409 the chain is on the extracellular side; sequence NIHCDCNIPPVLYS. A disulfide bond links Cys399 and Cys401. A helical transmembrane segment spans residues 410–431; that stretch reads AFTWLGYVNSAVNPIIYTTFNV. The Cytoplasmic segment spans residues 432 to 443; sequence EFRKAFMKILHC. Residue Cys443 is the site of S-palmitoyl cysteine attachment.

The protein belongs to the G-protein coupled receptor 1 family. In terms of assembly, forms homo- and heterooligomers with DRD4. The interaction with DRD4 may modulate agonist-induced downstream signaling. Interacts with CADPS and CADPS2. Interacts with GPRASP1, PPP1R9B and CLIC6. Interacts with ARRB2. Interacts with HTR2A. Interacts with DRD1. Interacts with KCNA2. Post-translationally, palmitoylated. Palmitoylation which is required for proper localization to the plasma membrane and stability of the receptor could be carried on by ZDHHC4, ZDHHC3 and ZDHHC8.

It localises to the cell membrane. The protein resides in the golgi apparatus membrane. In terms of biological role, dopamine receptor whose activity is mediated by G proteins which inhibit adenylyl cyclase. Positively regulates postnatal regression of retinal hyaloid vessels via suppression of VEGFR2/KDR activity, downstream of OPN5. This is D(2) dopamine receptor (DRD2) from Mustela putorius furo (European domestic ferret).